A 324-amino-acid chain; its full sequence is Phospho-N-acetylmuramoyl-pentapeptide-transferase (324 aa).

The next 10 membrane-spanning stretches (helical) occupy residues 5–25 (VILFTIIMGFLISVLISPILI), 50–70 (GTPTMGGVMIIVSIAITAIVM), 77–97 (LSAEMFLLLFVTIGYGLLGFL), 117–137 (LIGQIIIAIVFYGVYHYCHFS), 147–167 (LSIDLGWGYFILVLFMLVGGS), 176–196 (LDGLLSGTAAIAFGAFAILAW), 203–223 (VAIFSVAVVGAVLGFLVFNAH), 227–247 (VFMGDTGSLALGGAIVTVAIL), 250–270 (LEILLVIIGGVFVIETLSVIL), and 302–322 (VVVTFWTAGLLLAVLGIYIEV).

It belongs to the glycosyltransferase 4 family. MraY subfamily. Mg(2+) serves as cofactor.

The protein localises to the cell membrane. It carries out the reaction UDP-N-acetyl-alpha-D-muramoyl-L-alanyl-gamma-D-glutamyl-meso-2,6-diaminopimeloyl-D-alanyl-D-alanine + di-trans,octa-cis-undecaprenyl phosphate = di-trans,octa-cis-undecaprenyl diphospho-N-acetyl-alpha-D-muramoyl-L-alanyl-D-glutamyl-meso-2,6-diaminopimeloyl-D-alanyl-D-alanine + UMP. Its pathway is cell wall biogenesis; peptidoglycan biosynthesis. In terms of biological role, catalyzes the initial step of the lipid cycle reactions in the biosynthesis of the cell wall peptidoglycan: transfers peptidoglycan precursor phospho-MurNAc-pentapeptide from UDP-MurNAc-pentapeptide onto the lipid carrier undecaprenyl phosphate, yielding undecaprenyl-pyrophosphoryl-MurNAc-pentapeptide, known as lipid I. This is Phospho-N-acetylmuramoyl-pentapeptide-transferase from Bacillus velezensis (strain DSM 23117 / BGSC 10A6 / LMG 26770 / FZB42) (Bacillus amyloliquefaciens subsp. plantarum).